A 137-amino-acid polypeptide reads, in one-letter code: Large ribosomal subunit protein uL16 (137 aa).

The protein belongs to the universal ribosomal protein uL16 family. Part of the 50S ribosomal subunit.

In terms of biological role, binds 23S rRNA and is also seen to make contacts with the A and possibly P site tRNAs. The sequence is that of Large ribosomal subunit protein uL16 from Lactococcus lactis subsp. cremoris (strain SK11).